We begin with the raw amino-acid sequence, 465 residues long: Siroheme synthase (465 aa).

The interval 1–203 (MDFLPLFHSL…GRPAEAERLL (203 aa)) is precorrin-2 dehydrogenase /sirohydrochlorin ferrochelatase. NAD(+) contacts are provided by residues 22–23 (EV) and 43–44 (PQ). Ser128 bears the Phosphoserine mark. Residues 217 to 465 (GEVYLVGAGP…AWFEGAREDA (249 aa)) are uroporphyrinogen-III C-methyltransferase. Pro226 provides a ligand contact to S-adenosyl-L-methionine. Asp249 serves as the catalytic Proton acceptor. Lys271 (proton donor) is an active-site residue. S-adenosyl-L-methionine contacts are provided by residues 302–304 (GGD), Ile307, 332–333 (TA), Met384, and Gly413.

The protein in the N-terminal section; belongs to the precorrin-2 dehydrogenase / sirohydrochlorin ferrochelatase family. This sequence in the C-terminal section; belongs to the precorrin methyltransferase family.

The catalysed reaction is uroporphyrinogen III + 2 S-adenosyl-L-methionine = precorrin-2 + 2 S-adenosyl-L-homocysteine + H(+). The enzyme catalyses precorrin-2 + NAD(+) = sirohydrochlorin + NADH + 2 H(+). It carries out the reaction siroheme + 2 H(+) = sirohydrochlorin + Fe(2+). It functions in the pathway cofactor biosynthesis; adenosylcobalamin biosynthesis; precorrin-2 from uroporphyrinogen III: step 1/1. The protein operates within cofactor biosynthesis; adenosylcobalamin biosynthesis; sirohydrochlorin from precorrin-2: step 1/1. It participates in porphyrin-containing compound metabolism; siroheme biosynthesis; precorrin-2 from uroporphyrinogen III: step 1/1. Its pathway is porphyrin-containing compound metabolism; siroheme biosynthesis; siroheme from sirohydrochlorin: step 1/1. It functions in the pathway porphyrin-containing compound metabolism; siroheme biosynthesis; sirohydrochlorin from precorrin-2: step 1/1. Its function is as follows. Multifunctional enzyme that catalyzes the SAM-dependent methylations of uroporphyrinogen III at position C-2 and C-7 to form precorrin-2 via precorrin-1. Then it catalyzes the NAD-dependent ring dehydrogenation of precorrin-2 to yield sirohydrochlorin. Finally, it catalyzes the ferrochelation of sirohydrochlorin to yield siroheme. The sequence is that of Siroheme synthase from Pseudomonas aeruginosa (strain LESB58).